The following is a 302-amino-acid chain: tRNA-cytidine(32) 2-sulfurtransferase (302 aa).

The PP-loop motif motif lies at 44–49 (SGGKDS). Residues C119, C122, and C210 each contribute to the [4Fe-4S] cluster site.

Belongs to the TtcA family. As to quaternary structure, homodimer. Mg(2+) serves as cofactor. The cofactor is [4Fe-4S] cluster.

The protein localises to the cytoplasm. The catalysed reaction is cytidine(32) in tRNA + S-sulfanyl-L-cysteinyl-[cysteine desulfurase] + AH2 + ATP = 2-thiocytidine(32) in tRNA + L-cysteinyl-[cysteine desulfurase] + A + AMP + diphosphate + H(+). It participates in tRNA modification. Functionally, catalyzes the ATP-dependent 2-thiolation of cytidine in position 32 of tRNA, to form 2-thiocytidine (s(2)C32). The sulfur atoms are provided by the cysteine/cysteine desulfurase (IscS) system. The chain is tRNA-cytidine(32) 2-sulfurtransferase from Tolumonas auensis (strain DSM 9187 / NBRC 110442 / TA 4).